The following is a 1178-amino-acid chain: DNA-directed RNA polymerase subunit beta (1178 aa).

It belongs to the RNA polymerase beta chain family. In terms of assembly, the RNAP catalytic core consists of 2 alpha, 1 beta, 1 beta' and 1 omega subunit. When a sigma factor is associated with the core the holoenzyme is formed, which can initiate transcription.

The enzyme catalyses RNA(n) + a ribonucleoside 5'-triphosphate = RNA(n+1) + diphosphate. In terms of biological role, DNA-dependent RNA polymerase catalyzes the transcription of DNA into RNA using the four ribonucleoside triphosphates as substrates. This Treponema pallidum (strain Nichols) protein is DNA-directed RNA polymerase subunit beta.